The following is a 454-amino-acid chain: Inactive tetrahydroanabasine acetyltransferase pauper allele (454 aa).

Belongs to the plant acyltransferase family. As to quaternary structure, monomer.

This is Inactive tetrahydroanabasine acetyltransferase pauper allele from Lupinus albus (White lupine).